Consider the following 279-residue polypeptide: NADPH-dependent 7-cyano-7-deazaguanine reductase (279 aa).

A substrate-binding site is contributed by 86–88 (IES). 88 to 89 (SK) lines the NADPH pocket. C187 acts as the Thioimide intermediate in catalysis. D194 (proton donor) is an active-site residue. Residue 226-227 (HE) coordinates substrate. Residue 255–256 (RG) coordinates NADPH.

The protein belongs to the GTP cyclohydrolase I family. QueF type 2 subfamily. In terms of assembly, homodimer.

It localises to the cytoplasm. The enzyme catalyses 7-aminomethyl-7-carbaguanine + 2 NADP(+) = 7-cyano-7-deazaguanine + 2 NADPH + 3 H(+). It participates in tRNA modification; tRNA-queuosine biosynthesis. Its function is as follows. Catalyzes the NADPH-dependent reduction of 7-cyano-7-deazaguanine (preQ0) to 7-aminomethyl-7-deazaguanine (preQ1). This Glaesserella parasuis serovar 5 (strain SH0165) (Haemophilus parasuis) protein is NADPH-dependent 7-cyano-7-deazaguanine reductase.